Consider the following 122-residue polypeptide: Putative syntaxin 6 (122 aa).

Residues 1-100 (MSNYRYSKLN…AKLTHLEDES (100 aa)) lie on the Cytoplasmic side of the membrane. The t-SNARE coiled-coil homology domain maps to 31–93 (EQIIQEQDDE…DTAMKKMAKL (63 aa)). Residues 101-121 (SQCKMIMVLSALLFFLVFVLL) form a helical; Anchor for type IV membrane protein membrane-spanning segment. Position 122 (Val122) is a topological domain, extracellular.

This sequence belongs to the syntaxin family.

Its subcellular location is the membrane. Its function is as follows. SNARE promoting movement of transport vesicles to target membranes. Potentially functions in retrograde trafficking and in the endocytic recycling pathway. The chain is Putative syntaxin 6 (syx-6) from Caenorhabditis elegans.